Here is a 273-residue protein sequence, read N- to C-terminus: 29 kDa ribonucleoprotein A, chloroplastic (273 aa).

The N-terminal 58 residues, Met-1 to Lys-58, are a transit peptide targeting the chloroplast. In terms of domain architecture, RRM 1 spans Leu-87 to Pro-165. The segment at Arg-156 to Gly-181 is disordered. The linker (Gly-rich) stretch occupies residues Pro-166–Ser-187. The region spanning Asn-188–Ala-266 is the RRM 2 domain.

It is found in the plastid. It localises to the chloroplast. Its function is as follows. Could be involved in splicing and/or processing of chloroplast RNA's. The chain is 29 kDa ribonucleoprotein A, chloroplastic from Nicotiana sylvestris (Wood tobacco).